The sequence spans 338 residues: DNA-directed RNA polymerase subunit alpha (338 aa).

The interval 1-234 is alpha N-terminal domain (alpha-NTD); sequence MIHKNWAELI…DQLSVFVNFD (234 aa). The tract at residues 250 to 338 is alpha C-terminal domain (alpha-CTD); the sequence is FDPRLLKKVD…DLAKRFDDQF (89 aa).

It belongs to the RNA polymerase alpha chain family. Homodimer. The RNAP catalytic core consists of 2 alpha, 1 beta, 1 beta' and 1 omega subunit. When a sigma factor is associated with the core the holoenzyme is formed, which can initiate transcription.

The enzyme catalyses RNA(n) + a ribonucleoside 5'-triphosphate = RNA(n+1) + diphosphate. Functionally, DNA-dependent RNA polymerase catalyzes the transcription of DNA into RNA using the four ribonucleoside triphosphates as substrates. The polypeptide is DNA-directed RNA polymerase subunit alpha (Paracoccus denitrificans (strain Pd 1222)).